The chain runs to 427 residues: Diaminobutyrate--2-oxoglutarate transaminase (427 aa).

Lys269 carries the N6-(pyridoxal phosphate)lysine modification.

The protein belongs to the class-III pyridoxal-phosphate-dependent aminotransferase family. Pyridoxal 5'-phosphate serves as cofactor.

The catalysed reaction is L-2,4-diaminobutanoate + 2-oxoglutarate = L-aspartate 4-semialdehyde + L-glutamate. Its pathway is amine and polyamine biosynthesis; ectoine biosynthesis; L-ectoine from L-aspartate 4-semialdehyde: step 1/3. Catalyzes reversively the conversion of L-aspartate beta-semialdehyde (ASA) to L-2,4-diaminobutyrate (DABA) by transamination with L-glutamate. This Marinococcus halophilus protein is Diaminobutyrate--2-oxoglutarate transaminase (ectB).